The following is a 375-amino-acid chain: Alpha-2,8-sialyltransferase 8B (375 aa).

The Cytoplasmic portion of the chain corresponds to 1–6 (MQLQFR). A helical; Signal-anchor for type II membrane protein membrane pass occupies residues 7–23 (SWMLAALTLLVVFLIFA). The Lumenal portion of the chain corresponds to 24-375 (DISEIEEEIG…LTVGQCDGAT (352 aa)). 4 N-linked (GlcNAc...) asparagine glycosylation sites follow: Asn60, Asn72, Asn89, and Asn134. 2 disulfides stabilise this stretch: Cys157-Cys307 and Cys171-Cys371. Residues Asn162 and Asn185 each contribute to the CMP-N-acetyl-beta-neuraminate site. Asn219 and Asn234 each carry an N-linked (GlcNAc...) asparagine glycan. CMP-N-acetyl-beta-neuraminate-binding residues include Thr294, Thr295, Gly296, Trp316, Tyr329, and His330. The active-site Proton donor/acceptor is His346.

It belongs to the glycosyltransferase 29 family. In terms of processing, autopolysialylated. Autopolysialylation is not a prerequisite for the polysialylation acitity, but enhances the polysialylation acitity.

The protein localises to the golgi apparatus membrane. It is found in the secreted. It localises to the cell membrane. The catalysed reaction is [N-acetyl-alpha-D-neuraminosyl-(2-&gt;8)](n) + CMP-N-acetyl-beta-neuraminate = [N-acetyl-alpha-D-neuraminosyl-(2-&gt;8)](n+1) + CMP + H(+). It functions in the pathway protein modification; protein glycosylation. Functionally, catalyzes the transfer of a sialic acid from a CMP-linked sialic acid donor onto a terminal alpha-2,3-, alpha-2,6-, or alpha-2,8-linked sialic acid of an N-linked glycan acceptor through alpha-2,8-linkages. Therefore, participates in polysialic acid synthesis on various sialylated N-acetyllactosaminyl oligosaccharides (alpha-2,3-, alpha-2,6-, or alpha-2,8-linked sialic acid), including NCAM1, NCAM1 N-glycans, FETUB N-glycans, and to a lesser extent sialylparagloboside (SPG) and AHSG, which does not require the initial addition of an alpha 2,8-sialic acid. However, does not exhibit sialic acid-polymerase activity. Catalyzes polysialic acid synthesis in the hippocampal on NCAM1 and supports neurite outgrowth. ST8SIA2-mediated polysialylation influences on oligodendrocyte differentiation and may promote the integrity of myelin and axons. This chain is Alpha-2,8-sialyltransferase 8B, found in Pan troglodytes (Chimpanzee).